We begin with the raw amino-acid sequence, 377 residues long: Methylthioribose-1-phosphate isomerase (377 aa).

The active-site Proton donor is D254.

The protein belongs to the eIF-2B alpha/beta/delta subunits family. MtnA subfamily.

Its subcellular location is the cytoplasm. It is found in the nucleus. The enzyme catalyses 5-(methylsulfanyl)-alpha-D-ribose 1-phosphate = 5-(methylsulfanyl)-D-ribulose 1-phosphate. Its pathway is amino-acid biosynthesis; L-methionine biosynthesis via salvage pathway; L-methionine from S-methyl-5-thio-alpha-D-ribose 1-phosphate: step 1/6. Functionally, catalyzes the interconversion of methylthioribose-1-phosphate (MTR-1-P) into methylthioribulose-1-phosphate (MTRu-1-P). This is Methylthioribose-1-phosphate isomerase (mri1) from Aspergillus terreus (strain NIH 2624 / FGSC A1156).